Here is a 770-residue protein sequence, read N- to C-terminus: MELDINRTLLVLLGQVYTYIFQVELLRRCDPRVACRFLYRLAANCLTVRYLLKLFLRGFNTQLKFGNTPTVCALHWALCYVKGEGERLFELLQHFKTRFVYGETKDSNCIKDYFVSAFNLKTCQYHHELSLTTYGGYVSSEIQFLHDIENFLKQLNYCYIITSSREALNTLETVTRFMTDTIGSGLIPPVELFDPAHPCAICFEELCITANQGETLHRRLLGCICDHVTKQVRVNVDVDDIIRCLPYIPDVPDIKRQSAVEALRTLQTKTVVNPMGAKNDTFDQTYEIASTMLDSYNVFKPAPRCMYAISELKFWLTSNSTEGPQRTLDVFVDNLDVLNEHEKHAELTAVTVELALFGKTPIHFDRAFSEELGSLDAIDSILVGNRSSSPDSQIEALIKACYAHHLSSPLMRHISNPSHDNEAALRQLLERVGCEDDLTKEASDSATASECDLNDDSSITFAVHGWENLLSKAKIDAAERKRVYLEHLSKRSLTSLGRCIREQRQELEKTLRVNVYGEALLQTFVSMQNGFGARNVFLAKVSQAGCIIDNRIQEAAFDAHRFIRNTLVRHTVDAAMLPALTHKFFELVNGPLFNHDEHRFAQPPNTALFFTVENVGLFPHLKEELAKFMGGVVGSNWLLSPFRGFYCFSGVEGVTFAQRLAWKYIRELVFATTLFTSVFHCGEVRLCRVDRLGKDPRGCTSQPKGIGSSHGPLDGIYLTYEETCPLVAIIQSGETGIDQNTVVIYDSDVFSLLYTLMQRLAPDSTDPAFS.

A C3H1-type zinc finger spans residues 199–227 (CAICFEELCITANQGETLHRRLLGCICDH). Residue 675 to 682 (FTSVFHCG) coordinates ATP.

The protein belongs to the herpesviridae TRM1 protein family. Associates with TRM2 and TRM3 to form the tripartite terminase complex. Interacts with portal protein.

It localises to the host nucleus. Component of the molecular motor that translocates viral genomic DNA in empty capsid during DNA packaging. Forms a tripartite terminase complex together with TRM2 and TRM3 in the host cytoplasm. Once the complex reaches the host nucleus, it interacts with the capsid portal vertex. This portal forms a ring in which genomic DNA is translocated into the capsid. TRM1 carries an endonuclease activity that plays an important role for the cleavage of concatemeric viral DNA into unit length genomes. The polypeptide is Tripartite terminase subunit 1 (Varicella-zoster virus (strain Dumas) (HHV-3)).